An 802-amino-acid polypeptide reads, in one-letter code: Leucine--tRNA ligase (802 aa).

The short motif at 40–51 (PYPSGAGLHVGH) is the 'HIGH' region element. The short motif at 576–580 (KMSKS) is the 'KMSKS' region element. ATP is bound at residue K579.

It belongs to the class-I aminoacyl-tRNA synthetase family.

It localises to the cytoplasm. The catalysed reaction is tRNA(Leu) + L-leucine + ATP = L-leucyl-tRNA(Leu) + AMP + diphosphate. The polypeptide is Leucine--tRNA ligase (Bacillus anthracis (strain A0248)).